The following is a 702-amino-acid chain: Elongation factor G (702 aa).

Positions 8 to 290 (CQYRNIGISA…AIIEYLPAPN (283 aa)) constitute a tr-type G domain. Residues 17 to 24 (AHIDAGKT), 88 to 92 (DTPGH), and 142 to 145 (NKMD) each bind GTP.

This sequence belongs to the TRAFAC class translation factor GTPase superfamily. Classic translation factor GTPase family. EF-G/EF-2 subfamily.

Its subcellular location is the cytoplasm. Its function is as follows. Catalyzes the GTP-dependent ribosomal translocation step during translation elongation. During this step, the ribosome changes from the pre-translocational (PRE) to the post-translocational (POST) state as the newly formed A-site-bound peptidyl-tRNA and P-site-bound deacylated tRNA move to the P and E sites, respectively. Catalyzes the coordinated movement of the two tRNA molecules, the mRNA and conformational changes in the ribosome. The sequence is that of Elongation factor G from Buchnera aphidicola subsp. Schizaphis graminum (strain Sg).